A 698-amino-acid chain; its full sequence is Elongation factor G (698 aa).

The region spanning 8-290 (ERYRNIGISA…AVIEFLPSPV (283 aa)) is the tr-type G domain. GTP is bound by residues 17 to 24 (AHIDAGKT), 88 to 92 (DTPGH), and 142 to 145 (NKMD).

Belongs to the TRAFAC class translation factor GTPase superfamily. Classic translation factor GTPase family. EF-G/EF-2 subfamily.

The protein resides in the cytoplasm. Functionally, catalyzes the GTP-dependent ribosomal translocation step during translation elongation. During this step, the ribosome changes from the pre-translocational (PRE) to the post-translocational (POST) state as the newly formed A-site-bound peptidyl-tRNA and P-site-bound deacylated tRNA move to the P and E sites, respectively. Catalyzes the coordinated movement of the two tRNA molecules, the mRNA and conformational changes in the ribosome. In Azoarcus sp. (strain BH72), this protein is Elongation factor G.